The following is a 101-amino-acid chain: Small ribosomal subunit protein uS14 (101 aa).

This sequence belongs to the universal ribosomal protein uS14 family. As to quaternary structure, part of the 30S ribosomal subunit. Contacts proteins S3 and S10.

Its function is as follows. Binds 16S rRNA, required for the assembly of 30S particles and may also be responsible for determining the conformation of the 16S rRNA at the A site. The protein is Small ribosomal subunit protein uS14 of Chromobacterium violaceum (strain ATCC 12472 / DSM 30191 / JCM 1249 / CCUG 213 / NBRC 12614 / NCIMB 9131 / NCTC 9757 / MK).